We begin with the raw amino-acid sequence, 182 residues long: Isopentenyl-diphosphate Delta-isomerase (182 aa).

Mn(2+) contacts are provided by His25 and His32. A Nudix hydrolase domain is found at Leu30–Met164. Cys67 is an active-site residue. His69 serves as a coordination point for Mn(2+). Glu87 serves as a coordination point for Mg(2+). Residues Glu114 and Glu116 each contribute to the Mn(2+) site. Residue Glu116 is part of the active site.

Belongs to the IPP isomerase type 1 family. In terms of assembly, homodimer. It depends on Mg(2+) as a cofactor. Mn(2+) serves as cofactor.

It is found in the cytoplasm. The catalysed reaction is isopentenyl diphosphate = dimethylallyl diphosphate. Its pathway is isoprenoid biosynthesis; dimethylallyl diphosphate biosynthesis; dimethylallyl diphosphate from isopentenyl diphosphate: step 1/1. In terms of biological role, catalyzes the 1,3-allylic rearrangement of the homoallylic substrate isopentenyl (IPP) to its highly electrophilic allylic isomer, dimethylallyl diphosphate (DMAPP). The chain is Isopentenyl-diphosphate Delta-isomerase from Escherichia coli O127:H6 (strain E2348/69 / EPEC).